A 307-amino-acid chain; its full sequence is Protease HtpX homolog 1 (307 aa).

The next 2 membrane-spanning stretches (helical) occupy residues 7 to 27 (LKTL…IITY) and 38 to 60 (IFTA…YLVG). His133 contributes to the Zn(2+) binding site. Glu134 is an active-site residue. His137 contacts Zn(2+). Transmembrane regions (helical) follow at residues 145–165 (IGMA…FLLF) and 180–200 (LILG…TFLL). Zn(2+) is bound at residue Glu212.

Belongs to the peptidase M48B family. It depends on Zn(2+) as a cofactor.

Its subcellular location is the cell membrane. This is Protease HtpX homolog 1 from Sulfolobus acidocaldarius (strain ATCC 33909 / DSM 639 / JCM 8929 / NBRC 15157 / NCIMB 11770).